The chain runs to 106 residues: UPF0642 protein YBL028C (106 aa).

Residues 1 to 12 (MAKSLRASSHLN) show a composition bias toward polar residues. Disordered stretches follow at residues 1-21 (MAKSLRASSHLNAKSVKRRGV) and 52-106 (KEEQ…FTRF). Residues 62-72 (DEKKSNEEAPR) show a composition bias toward basic and acidic residues. Residues 83 to 106 (GRHHTYKKAKLMKQSKKKTSFTRF) are compositionally biased toward basic residues.

This sequence belongs to the UPF0642 family.

This Saccharomyces cerevisiae (strain ATCC 204508 / S288c) (Baker's yeast) protein is UPF0642 protein YBL028C.